The sequence spans 338 residues: Phenylalanine--tRNA ligase alpha subunit (338 aa).

E252 serves as a coordination point for Mg(2+).

It belongs to the class-II aminoacyl-tRNA synthetase family. Phe-tRNA synthetase alpha subunit type 1 subfamily. In terms of assembly, tetramer of two alpha and two beta subunits. It depends on Mg(2+) as a cofactor.

Its subcellular location is the cytoplasm. The enzyme catalyses tRNA(Phe) + L-phenylalanine + ATP = L-phenylalanyl-tRNA(Phe) + AMP + diphosphate + H(+). The chain is Phenylalanine--tRNA ligase alpha subunit from Pseudomonas syringae pv. tomato (strain ATCC BAA-871 / DC3000).